The sequence spans 420 residues: uncharacterized protein (420 aa).

Residues 1 to 25 (MRYAMNKIPALLLVGALIIATVASG) form the signal peptide. The residue at position 26 (C26) is an N-acetylcysteine. C26 is lipidated: S-archaeol cysteine.

Belongs to the bacterial solute-binding protein 1 family.

The protein localises to the cell membrane. Probably part of a binding-protein-dependent transport system PH1036/38/39. This is an uncharacterized protein from Pyrococcus horikoshii (strain ATCC 700860 / DSM 12428 / JCM 9974 / NBRC 100139 / OT-3).